The sequence spans 80 residues: Putative defensin-like protein 28 (80 aa).

Residues 1–22 (MLRANVVVSLVIFAALMQCMNG) form the signal peptide.

Belongs to the DEFL family.

It is found in the secreted. In Arabidopsis thaliana (Mouse-ear cress), this protein is Putative defensin-like protein 28.